The primary structure comprises 397 residues: Riboflavin biosynthesis protein RibBA (397 aa).

A DHBP synthase region spans residues 1 to 199 (MFHRIEEALE…IEDLIAYRRH (199 aa)). D-ribulose 5-phosphate-binding positions include 26–27 (RE), aspartate 31, 138–142 (RAGHT), and glutamate 162. Glutamate 27 provides a ligand contact to Mg(2+). Histidine 141 serves as a coordination point for Mg(2+). Residues 200 to 397 (HETLVTREVE…ASKLGHLLNL (198 aa)) are GTP cyclohydrolase II. 250 to 254 (RVHSE) serves as a coordination point for GTP. Cysteine 255, cysteine 266, and cysteine 268 together coordinate Zn(2+). Residues glutamine 271, 293–295 (EGR), and threonine 315 each bind GTP. Aspartate 327 (proton acceptor; for GTP cyclohydrolase activity) is an active-site residue. Residue arginine 329 is the Nucleophile; for GTP cyclohydrolase activity of the active site. GTP contacts are provided by threonine 350 and lysine 355.

The protein in the N-terminal section; belongs to the DHBP synthase family. This sequence in the C-terminal section; belongs to the GTP cyclohydrolase II family. Requires Mg(2+) as cofactor. Mn(2+) is required as a cofactor. It depends on Zn(2+) as a cofactor.

The enzyme catalyses D-ribulose 5-phosphate = (2S)-2-hydroxy-3-oxobutyl phosphate + formate + H(+). It carries out the reaction GTP + 4 H2O = 2,5-diamino-6-hydroxy-4-(5-phosphoribosylamino)-pyrimidine + formate + 2 phosphate + 3 H(+). Its pathway is cofactor biosynthesis; riboflavin biosynthesis; 2-hydroxy-3-oxobutyl phosphate from D-ribulose 5-phosphate: step 1/1. It participates in cofactor biosynthesis; riboflavin biosynthesis; 5-amino-6-(D-ribitylamino)uracil from GTP: step 1/4. In terms of biological role, catalyzes the conversion of D-ribulose 5-phosphate to formate and 3,4-dihydroxy-2-butanone 4-phosphate. Its function is as follows. Catalyzes the conversion of GTP to 2,5-diamino-6-ribosylamino-4(3H)-pyrimidinone 5'-phosphate (DARP), formate and pyrophosphate. This Bacillus mycoides (strain KBAB4) (Bacillus weihenstephanensis) protein is Riboflavin biosynthesis protein RibBA.